The following is a 257-amino-acid chain: Imidazole glycerol phosphate synthase subunit HisF (257 aa).

Active-site residues include Asp12 and Asp131.

It belongs to the HisA/HisF family. As to quaternary structure, heterodimer of HisH and HisF.

The protein resides in the cytoplasm. It carries out the reaction 5-[(5-phospho-1-deoxy-D-ribulos-1-ylimino)methylamino]-1-(5-phospho-beta-D-ribosyl)imidazole-4-carboxamide + L-glutamine = D-erythro-1-(imidazol-4-yl)glycerol 3-phosphate + 5-amino-1-(5-phospho-beta-D-ribosyl)imidazole-4-carboxamide + L-glutamate + H(+). Its pathway is amino-acid biosynthesis; L-histidine biosynthesis; L-histidine from 5-phospho-alpha-D-ribose 1-diphosphate: step 5/9. IGPS catalyzes the conversion of PRFAR and glutamine to IGP, AICAR and glutamate. The HisF subunit catalyzes the cyclization activity that produces IGP and AICAR from PRFAR using the ammonia provided by the HisH subunit. In Paraburkholderia xenovorans (strain LB400), this protein is Imidazole glycerol phosphate synthase subunit HisF.